The following is a 556-amino-acid chain: Genetic interactor of prohibitins 3, mitochondrial (556 aa).

The N-terminal 21 residues, 1–21, are a transit peptide targeting the mitochondrion; sequence MLNLCHALRGVRQFSCSVIVK. The CP-type G domain maps to 113–305; it reads ESTLNDILNY…LFDLPGYSTS (193 aa).

This sequence belongs to the TRAFAC class YlqF/YawG GTPase family. GEP3 subfamily.

The protein resides in the mitochondrion. Interacts genetically with prohibitins and thus may be involved in the mitochondrial lipid metabolism. The chain is Genetic interactor of prohibitins 3, mitochondrial (GEP3) from Saccharomyces cerevisiae (strain Zymaflore VL3) (Baker's yeast).